The following is a 316-amino-acid chain: Putative metal-binding protein TP_0034 (316 aa).

Residues 1 to 19 (MQRCSVVAALAGVVFLAQA) form the signal peptide. 3 residues coordinate a divalent metal cation: H68, H146, and H210.

Belongs to the bacterial solute-binding protein 9 family.

It is found in the periplasm. Functionally, part of an ATP-binding cassette (ABC) transport system involved in metal import. Binds a metal with high affinity and specificity and delivers it to the membrane permease for translocation into the cytoplasm. This Treponema pallidum (strain Nichols) protein is Putative metal-binding protein TP_0034.